Consider the following 699-residue polypeptide: Protein STRUBBELIG-RECEPTOR FAMILY 5 (699 aa).

Positions 1 to 22 are cleaved as a signal peptide; the sequence is MTQKLVRLVIVSLAITVTLLQA. Residues 23–273 are Extracellular-facing; sequence KTDNQEVSAL…DGGGITAGTG (251 aa). 5 LRR repeats span residues 93–115, 116–136, 139–161, 163–186, and 187–209; these read SLTT…LPPN, IANL…SLSQ, NLQS…FQKL, KLET…ANLT, and SLKK…RNLA. A glycan (N-linked (GlcNAc...) asparagine) is linked at N184. The tract at residues 239-263 is disordered; sequence NDWSTETAPPPPPGVKYGRKSSGSK. A helical membrane pass occupies residues 274-294; sequence MVIAGACLGVLVLIIVLIALV. Topologically, residues 295–699 are cytoplasmic; the sequence is SKKKSSLSPH…SYRAHDDYDY (405 aa). S368 is subject to Phosphoserine. The Protein kinase domain maps to 404–675; sequence FSPGNLLGEG…SEVVEALVRM (272 aa). ATP is bound by residues 410-418 and K432; that span reads LGEGSIGRV.

This sequence belongs to the protein kinase superfamily. Ser/Thr protein kinase family. In terms of tissue distribution, expressed in leaves and flowers.

The protein resides in the membrane. The protein is Protein STRUBBELIG-RECEPTOR FAMILY 5 (SRF5) of Arabidopsis thaliana (Mouse-ear cress).